The sequence spans 117 residues: Large ribosomal subunit protein uL18 (117 aa).

It belongs to the universal ribosomal protein uL18 family. Part of the 50S ribosomal subunit; part of the 5S rRNA/L5/L18/L25 subcomplex. Contacts the 5S and 23S rRNAs.

In terms of biological role, this is one of the proteins that bind and probably mediate the attachment of the 5S RNA into the large ribosomal subunit, where it forms part of the central protuberance. In Sphingopyxis alaskensis (strain DSM 13593 / LMG 18877 / RB2256) (Sphingomonas alaskensis), this protein is Large ribosomal subunit protein uL18.